The following is a 661-amino-acid chain: FAST kinase domain-containing protein 3, mitochondrial (661 aa).

In terms of domain architecture, RAP spans 592–650 (VALCIDGPQRFCLDSKHLLGKEATKQRHLRLLGYQVVQLPYHELELLTSRLELVDYLQR).

The protein belongs to the FAST kinase family. As to expression, expression detected in spleen, testis, colon, heart, smooth muscle, kidney, brain, lung, liver, brown and white adipose tissue with highest expression in testis and smooth muscle.

It is found in the mitochondrion. In terms of biological role, required for normal mitochondrial respiration. Increases steady-state levels and half-lives of a subset of mature mitochondrial mRNAs MT-ND2, MT-ND3, MT-CYTB, MT-CO2, and MT-ATP8/6. Promotes MT-CO1 mRNA translation and increases mitochondrial complex IV assembly and activity. The sequence is that of FAST kinase domain-containing protein 3, mitochondrial (Fastkd3) from Mus musculus (Mouse).